The primary structure comprises 514 residues: Na(+)/H(+) antiporter NhaB (514 aa).

The next 11 helical transmembrane spans lie at 21–41 (LAIV…SPFI), 43–63 (GWLL…CYPL), 88–108 (IMAN…IFFM), 143–163 (FLDA…FYGV), 203–223 (LMMH…VGEP), 239–259 (FFLR…LTCF), 304–324 (ALIA…VGLI), 349–369 (QESL…AVII), 390–410 (LALF…VFVA), 448–468 (ATPN…SPLI), and 484–504 (IVLS…ATIW).

Belongs to the NhaB Na(+)/H(+) (TC 2.A.34) antiporter family.

The protein localises to the cell inner membrane. It carries out the reaction 2 Na(+)(in) + 3 H(+)(out) = 2 Na(+)(out) + 3 H(+)(in). Its function is as follows. Na(+)/H(+) antiporter that extrudes sodium in exchange for external protons. The sequence is that of Na(+)/H(+) antiporter NhaB from Haemophilus influenzae (strain 86-028NP).